Reading from the N-terminus, the 305-residue chain is UDP-3-O-acyl-N-acetylglucosamine deacetylase (305 aa).

Histidine 79, histidine 238, and aspartate 242 together coordinate Zn(2+). The Proton donor role is filled by histidine 265.

This sequence belongs to the LpxC family. The cofactor is Zn(2+).

The enzyme catalyses a UDP-3-O-[(3R)-3-hydroxyacyl]-N-acetyl-alpha-D-glucosamine + H2O = a UDP-3-O-[(3R)-3-hydroxyacyl]-alpha-D-glucosamine + acetate. Its pathway is glycolipid biosynthesis; lipid IV(A) biosynthesis; lipid IV(A) from (3R)-3-hydroxytetradecanoyl-[acyl-carrier-protein] and UDP-N-acetyl-alpha-D-glucosamine: step 2/6. Catalyzes the hydrolysis of UDP-3-O-myristoyl-N-acetylglucosamine to form UDP-3-O-myristoylglucosamine and acetate, the committed step in lipid A biosynthesis. The chain is UDP-3-O-acyl-N-acetylglucosamine deacetylase from Vibrio cholerae serotype O1 (strain ATCC 39541 / Classical Ogawa 395 / O395).